The primary structure comprises 93 residues: Large ribosomal subunit protein eL29 (93 aa).

A compositionally biased stretch (basic residues) spans 1-31 (MAKSKNHSTHHKNRKDHRNGIKKAVVHKKTS). Residues 1–33 (MAKSKNHSTHHKNRKDHRNGIKKAVVHKKTSSK) form a disordered region.

Belongs to the eukaryotic ribosomal protein eL29 family.

The sequence is that of Large ribosomal subunit protein eL29 (rpl29) from Dictyostelium discoideum (Social amoeba).